Here is a 184-residue protein sequence, read N- to C-terminus: Ribosome-recycling factor (184 aa).

Belongs to the RRF family.

It is found in the cytoplasm. Responsible for the release of ribosomes from messenger RNA at the termination of protein biosynthesis. May increase the efficiency of translation by recycling ribosomes from one round of translation to another. This chain is Ribosome-recycling factor, found in Borreliella afzelii (strain PKo) (Borrelia afzelii).